The chain runs to 120 residues: U-scoloptoxin(16)-Er2a (120 aa).

The signal sequence occupies residues methionine 1–alanine 26.

The protein belongs to the scoloptoxin-16 family. In terms of processing, contains 4 disulfide bonds. Expressed by the venom gland.

It is found in the secreted. The polypeptide is U-scoloptoxin(16)-Er2a (Ethmostigmus rubripes (Giant centipede)).